The chain runs to 252 residues: Thiazole synthase (252 aa).

The Schiff-base intermediate with DXP role is filled by K98. 1-deoxy-D-xylulose 5-phosphate contacts are provided by residues G159, 185–186, and 207–208; these read AG and AT.

This sequence belongs to the ThiG family. In terms of assembly, homotetramer. Forms heterodimers with either ThiH or ThiS.

The protein resides in the cytoplasm. The catalysed reaction is [ThiS sulfur-carrier protein]-C-terminal-Gly-aminoethanethioate + 2-iminoacetate + 1-deoxy-D-xylulose 5-phosphate = [ThiS sulfur-carrier protein]-C-terminal Gly-Gly + 2-[(2R,5Z)-2-carboxy-4-methylthiazol-5(2H)-ylidene]ethyl phosphate + 2 H2O + H(+). It participates in cofactor biosynthesis; thiamine diphosphate biosynthesis. In terms of biological role, catalyzes the rearrangement of 1-deoxy-D-xylulose 5-phosphate (DXP) to produce the thiazole phosphate moiety of thiamine. Sulfur is provided by the thiocarboxylate moiety of the carrier protein ThiS. In vitro, sulfur can be provided by H(2)S. This chain is Thiazole synthase, found in Mycobacterium avium (strain 104).